The primary structure comprises 304 residues: N-acetylmuramic acid 6-phosphate etherase (304 aa).

Positions 57-220 constitute an SIS domain; that stretch reads AVKGLSAGGR…STATMVGLGK (164 aa). The active-site Proton donor is Glu-85. The active site involves Glu-116.

This sequence belongs to the GCKR-like family. MurNAc-6-P etherase subfamily. As to quaternary structure, homodimer.

It carries out the reaction N-acetyl-D-muramate 6-phosphate + H2O = N-acetyl-D-glucosamine 6-phosphate + (R)-lactate. Its pathway is amino-sugar metabolism; N-acetylmuramate degradation. Specifically catalyzes the cleavage of the D-lactyl ether substituent of MurNAc 6-phosphate, producing GlcNAc 6-phosphate and D-lactate. In Cutibacterium acnes (strain DSM 16379 / KPA171202) (Propionibacterium acnes), this protein is N-acetylmuramic acid 6-phosphate etherase.